The primary structure comprises 127 residues: Glycine cleavage system H protein (127 aa).

One can recognise a Lipoyl-binding domain in the interval 22–104 (KVRIGITDFA…YEKAWMIVVE (83 aa)). Position 63 is an N6-lipoyllysine (Lys-63).

This sequence belongs to the GcvH family. As to quaternary structure, the glycine cleavage system is composed of four proteins: P, T, L and H. It depends on (R)-lipoate as a cofactor.

The glycine cleavage system catalyzes the degradation of glycine. The H protein shuttles the methylamine group of glycine from the P protein to the T protein. Functionally, is also involved in protein lipoylation via its role as an octanoyl/lipoyl carrier protein intermediate. The polypeptide is Glycine cleavage system H protein (Geobacillus sp. (strain WCH70)).